The following is a 906-amino-acid chain: Transmembrane channel-like protein 2 (906 aa).

The tract at residues 1-150 is disordered; the sequence is MSHQVKGLKE…SASGGESLSE (150 aa). Residues 1 to 263 lie on the Cytoplasmic side of the membrane; sequence MSHQVKGLKE…IFLRWMYGVN (263 aa). Residues 69–79 are compositionally biased toward basic residues; sequence PRRKQTGRRRH. The segment covering 80–127 has biased composition (basic and acidic residues); the sequence is REELGEQERGEAERTCEGRRKRDERASFQERTAAPKREKEIPRREEKS. Low complexity predominate over residues 135–147; that stretch reads SSSLASSASGGES. Residues 264-284 traverse the membrane as a helical segment; the sequence is LVLFGLIFGLVIIPEVLMGMP. Residues 285–336 are Extracellular-facing; the sequence is YGSIPRKTVPRAEEEKAMDFSVLWDFEGYIKYSALFYGYYNNQRTIGWLRYR. Residues 337–357 form a helical membrane-spanning segment; the sequence is LPMAYFMVGVSVFGYSLIIVI. At 358 to 431 the chain is on the cytoplasmic side; the sequence is RSMASNTQGS…NIHLTRFLRV (74 aa). The helical transmembrane segment at 432-452 threads the bilayer; it reads LANFLIICCLCGSGYLIYFVV. The Extracellular portion of the chain corresponds to 453-508; it reads KRSQQFSKMQNVSWYERNEVEIVMSLLGMFCPPLFETIAALENYHPRTGLKWQLGR. The helical transmembrane segment at 509–529 threads the bilayer; sequence IFALFLGNLYTFLLALMDDVH. At 530–693 the chain is on the cytoplasmic side; the sequence is LKLANEETIK…RVFKASRSNN (164 aa). A helical transmembrane segment spans residues 694–714; that stretch reads FYMGLLLLVLFLSLLPVAYTI. Residues 715-750 are Extracellular-facing; it reads MSLPPSFDCGPFSGKNRMYDVLQETIENDFPTFLGK. A helical transmembrane segment spans residues 751-771; that stretch reads IFAFLANPGLIIPAILLMFLA. Topologically, residues 772–906 are cytoplasmic; the sequence is IYYLNSVSKS…SGKSAQRPPH (135 aa). The interval 800–906 is disordered; it reads EKSHKSVKGK…SGKSAQRPPH (107 aa). 3 stretches are compositionally biased toward polar residues: residues 820–846, 854–866, and 886–900; these read KSSSKNATQLQLTKEETTPPSASQSQA, PGTSNSASRTTLP, and APSQTHPWRSASGKS.

Belongs to the TMC family. In terms of assembly, forms the MET channel composed of TMC dimer (TMC1 or TMC2), TMIE, TOMT, CIB (CIB2 or CIB3), LHFPL5 and PDH15. The interaction of TMC1 and TMC2 with TOMT is required for the transportation of TMC1/2 into the stereocilia of hair cells. Interacts (via N-terminus) with both isoforms CD1 and CD3 of PCDH15. Can form a heterodimer with TMC1, TMC5 or TMC7. As to expression, detected in fetal cochlea.

The protein resides in the cell membrane. It carries out the reaction Ca(2+)(in) = Ca(2+)(out). In terms of biological role, pore-forming subunit of the mechanotransducer (MET) non-selective cation channel complex located at the tips of stereocilia of cochlear hair cells and that mediates sensory transduction in the auditory system. The MET complex is composed of two dimeric pore-forming ion-conducting transmembrane TMC (TMC1 or TMC2) subunits, and aided by several auxiliary proteins including LHFPL5, TMIE, CIB2/3 and TOMT, and the tip-link PCDH15. MET channel is activated by tension in the tip-link extending from the side wall of one stereocilium to the tip of the adjacent shorter stereocilium, where the channel is located. TMC2 MET channel is highly permeable to calcium and likely transports monovalent cations. Also involved in vestibular hair cell transduction current of the mammalian inner ear. The sequence is that of Transmembrane channel-like protein 2 from Homo sapiens (Human).